A 471-amino-acid chain; its full sequence is GTPase Der (471 aa).

2 consecutive EngA-type G domains span residues 3–166 (PTLA…EPEA) and 177–350 (IKLA…SSAT). GTP is bound by residues 9-16 (GRPNVGKS), 56-60 (DTGGI), 118-121 (NKVD), 183-190 (GRPNVGKS), 230-234 (DTAGV), and 295-298 (NKWD). A KH-like domain is found at 351–435 (EKLNTNFLTK…PIRFEFKSSE (85 aa)). Residues 432–471 (KSSENPFAGRKNAMSKKPEHPSRRANSGGKSINRRPRPKS) form a disordered region.

The protein belongs to the TRAFAC class TrmE-Era-EngA-EngB-Septin-like GTPase superfamily. EngA (Der) GTPase family. Associates with the 50S ribosomal subunit.

Functionally, GTPase that plays an essential role in the late steps of ribosome biogenesis. The protein is GTPase Der of Saccharophagus degradans (strain 2-40 / ATCC 43961 / DSM 17024).